The sequence spans 416 residues: 4-hydroxy-3-methylbut-2-en-1-yl diphosphate synthase (flavodoxin) (416 aa).

The [4Fe-4S] cluster site is built by Cys304, Cys307, Cys350, and Glu357.

It belongs to the IspG family. Requires [4Fe-4S] cluster as cofactor.

It carries out the reaction (2E)-4-hydroxy-3-methylbut-2-enyl diphosphate + oxidized [flavodoxin] + H2O + 2 H(+) = 2-C-methyl-D-erythritol 2,4-cyclic diphosphate + reduced [flavodoxin]. The protein operates within isoprenoid biosynthesis; isopentenyl diphosphate biosynthesis via DXP pathway; isopentenyl diphosphate from 1-deoxy-D-xylulose 5-phosphate: step 5/6. Converts 2C-methyl-D-erythritol 2,4-cyclodiphosphate (ME-2,4cPP) into 1-hydroxy-2-methyl-2-(E)-butenyl 4-diphosphate. This Rhizobium etli (strain CIAT 652) protein is 4-hydroxy-3-methylbut-2-en-1-yl diphosphate synthase (flavodoxin).